Reading from the N-terminus, the 473-residue chain is Tubulin gamma chain (473 aa).

The interval 33–56 is disordered; the sequence is TDGLSQLPDSSTERDDDTKPFFRE. A compositionally biased stretch (basic and acidic residues) spans 43 to 56; it reads STERDDDTKPFFRE. Position 143–149 (143–149) interacts with GTP; that stretch reads AGGTGSG.

Belongs to the tubulin family. As to quaternary structure, interacts with SPC72, SPC97 and SPC98.

It localises to the cytoplasm. It is found in the cytoskeleton. The protein resides in the microtubule organizing center. The protein localises to the spindle pole body. Tubulin is the major constituent of microtubules. The gamma chain is found at microtubule organizing centers (MTOC) such as the spindle poles or the centrosome, suggesting that it is involved in the minus-end nucleation of microtubule assembly. TUB4 is an important spindle pole body component that organizes both cytoplasmic and nuclear microtubule arrays. This chain is Tubulin gamma chain (TUB4), found in Saccharomyces cerevisiae (strain ATCC 204508 / S288c) (Baker's yeast).